The sequence spans 475 residues: Probable phenylalanine--tRNA ligase alpha subunit (475 aa).

Residues 2–151 (TAVAQKIIEN…KRKLVSRRKK (150 aa)) are contains the major tRNA-Phe binding sites. L-phenylalanine contacts are provided by residues Thr309, 351 to 353 (QVE), and Tyr391. Glu393 contributes to the Mg(2+) binding site. L-phenylalanine is bound at residue Phe417.

It belongs to the class-II aminoacyl-tRNA synthetase family. Phe-tRNA synthetase alpha subunit type 2 subfamily. As to quaternary structure, tetramer of two alpha and two beta subunits. Requires Mg(2+) as cofactor.

Its subcellular location is the cytoplasm. The enzyme catalyses tRNA(Phe) + L-phenylalanine + ATP = L-phenylalanyl-tRNA(Phe) + AMP + diphosphate + H(+). In Encephalitozoon cuniculi (strain GB-M1) (Microsporidian parasite), this protein is Probable phenylalanine--tRNA ligase alpha subunit.